Consider the following 55-residue polypeptide: Sec-independent protein translocase protein TatA (55 aa).

The helical transmembrane segment at 1 to 21 threads the bilayer; it reads MFGELGVPEVLFILGIALLIF.

This sequence belongs to the TatA/E family. Forms a complex with TatC.

It is found in the cell inner membrane. In terms of biological role, part of the twin-arginine translocation (Tat) system that transports large folded proteins containing a characteristic twin-arginine motif in their signal peptide across membranes. TatA could form the protein-conducting channel of the Tat system. The chain is Sec-independent protein translocase protein TatA from Koribacter versatilis (strain Ellin345).